The primary structure comprises 284 residues: GPN-loop GTPase 3 (284 aa).

Gly13 to Thr18 is a binding site for GTP. Positions Gly72–Asn74 match the Gly-Pro-Asn (GPN)-loop; involved in dimer interface motif. Residue Thr174–Asp177 participates in GTP binding. The tract at residues Lys261 to Glu284 is disordered.

It belongs to the GPN-loop GTPase family. Heterodimer with GPN1. Binds to RNA polymerase II (RNAPII). Interacts directly with subunits RPB4 and RPB7 and the CTD of RPB1.

Its function is as follows. Small GTPase required for proper localization of RNA polymerase II (RNAPII). May act at an RNAP assembly step prior to nuclear import. The protein is GPN-loop GTPase 3 of Bos taurus (Bovine).